We begin with the raw amino-acid sequence, 313 residues long: Undecaprenyl-diphosphatase (313 aa).

The next 6 membrane-spanning stretches (helical) occupy residues 121–141 (YRIGWYVIIATIPIGVLGFLF), 152–172 (LWLVSFMLIAFALVIAAAEHY), 187–207 (GLVMGFAQCLALIPGVSRSGA), 225–245 (FSFLLAIPAVTASGLFSLPDA), 259–279 (QLLVATIVSFVVGYASVAWLL), and 290–310 (FVGYRIVLGLVIMGLLGAGVI).

The protein belongs to the UppP family.

It is found in the cell membrane. It carries out the reaction di-trans,octa-cis-undecaprenyl diphosphate + H2O = di-trans,octa-cis-undecaprenyl phosphate + phosphate + H(+). Its function is as follows. Catalyzes the dephosphorylation of undecaprenyl diphosphate (UPP). Confers resistance to bacitracin. The chain is Undecaprenyl-diphosphatase from Nocardia farcinica (strain IFM 10152).